Reading from the N-terminus, the 285-residue chain is Bis(5'-nucleosyl)-tetraphosphatase, symmetrical (285 aa).

Belongs to the Ap4A hydrolase family.

The enzyme catalyses P(1),P(4)-bis(5'-adenosyl) tetraphosphate + H2O = 2 ADP + 2 H(+). Functionally, hydrolyzes diadenosine 5',5'''-P1,P4-tetraphosphate to yield ADP. The polypeptide is Bis(5'-nucleosyl)-tetraphosphatase, symmetrical (Pseudomonas entomophila (strain L48)).